The sequence spans 331 residues: 6-phosphogluconolactonase (331 aa).

Lys287 bears the N6-acetyllysine mark.

Belongs to the cycloisomerase 2 family.

The enzyme catalyses 6-phospho-D-glucono-1,5-lactone + H2O = 6-phospho-D-gluconate + H(+). The protein operates within carbohydrate degradation; pentose phosphate pathway; D-ribulose 5-phosphate from D-glucose 6-phosphate (oxidative stage): step 2/3. Functionally, catalyzes the hydrolysis of 6-phosphogluconolactone to 6-phosphogluconate. This Shigella flexneri protein is 6-phosphogluconolactonase.